The primary structure comprises 123 residues: Small ribosomal subunit protein uS12c (123 aa).

Belongs to the universal ribosomal protein uS12 family. As to quaternary structure, part of the 30S ribosomal subunit.

It is found in the plastid. It localises to the chloroplast. Its function is as follows. With S4 and S5 plays an important role in translational accuracy. Located at the interface of the 30S and 50S subunits. In Chaetosphaeridium globosum (Charophycean green alga), this protein is Small ribosomal subunit protein uS12c (rps12).